Reading from the N-terminus, the 493-residue chain is C2H2-type transcription factor ffmA (493 aa).

A compositionally biased stretch (low complexity) spans 1–18 (MPMPQYTMQPQYPVSQPH). Disordered stretches follow at residues 1–50 (MPMP…SRYP), 68–140 (TTVG…YPDG), and 164–202 (EPPR…KNTT). 2 stretches are compositionally biased toward polar residues: residues 69–79 (TVGSLPPSTFL) and 192–202 (NGVNGTAKNTT). The segment at 212–234 (FPCPHCNKTYLHAKHLKRHLLRH) adopts a C2H2-type 1 zinc-finger fold. The segment at 240–265 (YMCVLCKDTFSRSDILKRHFQKCSIR) adopts a C2H2-type 2; degenerate zinc-finger fold. Composition is skewed to polar residues over residues 288-307 (QAAA…TVPP) and 484-493 (ASTTLGGDGK). Disordered stretches follow at residues 288–316 (QAAA…GATF) and 468–493 (TTTA…GDGK).

Belongs to the krueppel C2H2-type zinc-finger protein family.

The protein localises to the nucleus. In terms of biological role, transcription factor that acts in coordination with atrR to regulate the expression of the ABC-type multidrug transporter abcG1 and thus plays a role in azole susceptibility. Regulates the expression of genes involved in fermentation. Is able to promote expression from the yeast FLO11 promoter. The sequence is that of C2H2-type transcription factor ffmA from Aspergillus fumigatus (strain CBS 144.89 / FGSC A1163 / CEA10) (Neosartorya fumigata).